Here is a 74-residue protein sequence, read N- to C-terminus: Brevinin-2CG1 (74 aa).

An N-terminal signal peptide occupies residues 1–22 (MFTMKKSMLVLFFLGTISLSLC). Positions 23–39 (EEERNADEDDGEMTEEV) are cleaved as a propeptide — removed in mature form. Residues Cys-68 and Cys-74 are joined by a disulfide bond.

As to expression, expressed by the skin glands.

It is found in the secreted. Antimicrobial peptide active against a variety of Gram-positive and some Gram-negative bacterial strains. Has antifungal activity against a slime mold isolate. Has hemolytic activity against human erythrocytes. This Amolops chunganensis (Chungan torrent frog) protein is Brevinin-2CG1.